A 99-amino-acid chain; its full sequence is Ubiquitin-related modifier 1 (99 aa).

Position 99 is a 1-thioglycine (Gly99). A Glycyl lysine isopeptide (Gly-Lys) (interchain with K-? in acceptor proteins) cross-link involves residue Gly99.

It belongs to the URM1 family. C-terminal thiocarboxylation occurs in 2 steps, it is first acyl-adenylated (-COAMP) via the hesA/moeB/thiF part of UBA4, then thiocarboxylated (-COSH) via the rhodanese domain of UBA4.

The protein localises to the cytoplasm. The protein operates within tRNA modification; 5-methoxycarbonylmethyl-2-thiouridine-tRNA biosynthesis. Acts as a sulfur carrier required for 2-thiolation of mcm(5)S(2)U at tRNA wobble positions of cytosolic tRNA(Lys), tRNA(Glu) and tRNA(Gln). Serves as sulfur donor in tRNA 2-thiolation reaction by being thiocarboxylated (-COSH) at its C-terminus by the MOCS3 homolog UBA4. The sulfur is then transferred to tRNA to form 2-thiolation of mcm(5)S(2)U. Prior mcm(5) tRNA modification by the elongator complex is required for 2-thiolation. Also acts as a ubiquitin-like protein (UBL) that is covalently conjugated via an isopeptide bond to lysine residues of target proteins such as AHP1. The thiocarboxylated form serves as substrate for conjugation and oxidative stress specifically induces the formation of UBL-protein conjugates. This Yarrowia lipolytica (strain CLIB 122 / E 150) (Yeast) protein is Ubiquitin-related modifier 1.